The primary structure comprises 72 residues: Translation initiation factor IF-1 (72 aa).

In terms of domain architecture, S1-like spans 1 to 72 (MAKQSAIEQD…SKGRIVFRYK (72 aa)).

This sequence belongs to the IF-1 family. In terms of assembly, component of the 30S ribosomal translation pre-initiation complex which assembles on the 30S ribosome in the order IF-2 and IF-3, IF-1 and N-formylmethionyl-tRNA(fMet); mRNA recruitment can occur at any time during PIC assembly.

Its subcellular location is the cytoplasm. Its function is as follows. One of the essential components for the initiation of protein synthesis. Stabilizes the binding of IF-2 and IF-3 on the 30S subunit to which N-formylmethionyl-tRNA(fMet) subsequently binds. Helps modulate mRNA selection, yielding the 30S pre-initiation complex (PIC). Upon addition of the 50S ribosomal subunit IF-1, IF-2 and IF-3 are released leaving the mature 70S translation initiation complex. The sequence is that of Translation initiation factor IF-1 from Bacteroides fragilis (strain ATCC 25285 / DSM 2151 / CCUG 4856 / JCM 11019 / LMG 10263 / NCTC 9343 / Onslow / VPI 2553 / EN-2).